The chain runs to 464 residues: Adenosylhomocysteinase (464 aa).

Residues Thr-56, Asp-131, and Glu-190 each contribute to the substrate site. Residue 191 to 193 (TTT) coordinates NAD(+). Residues Lys-220 and Asp-224 each contribute to the substrate site. Residues Asn-225, 254-259 (GFGDVG), Glu-277, Asn-312, 333-335 (IGH), and Asn-378 each bind NAD(+).

It belongs to the adenosylhomocysteinase family. NAD(+) is required as a cofactor.

The protein resides in the cytoplasm. It carries out the reaction S-adenosyl-L-homocysteine + H2O = L-homocysteine + adenosine. It functions in the pathway amino-acid biosynthesis; L-homocysteine biosynthesis; L-homocysteine from S-adenosyl-L-homocysteine: step 1/1. Its function is as follows. May play a key role in the regulation of the intracellular concentration of adenosylhomocysteine. The sequence is that of Adenosylhomocysteinase from Zymomonas mobilis subsp. mobilis (strain ATCC 31821 / ZM4 / CP4).